The sequence spans 1463 residues: DNA polymerase III PolC-type (1463 aa).

Residues 425–581 (YVVFDVETTG…YDAEATGRLL (157 aa)) form the Exonuclease domain.

It belongs to the DNA polymerase type-C family. PolC subfamily.

The protein resides in the cytoplasm. The catalysed reaction is DNA(n) + a 2'-deoxyribonucleoside 5'-triphosphate = DNA(n+1) + diphosphate. Required for replicative DNA synthesis. This DNA polymerase also exhibits 3' to 5' exonuclease activity. This is DNA polymerase III PolC-type from Streptococcus pneumoniae serotype 4 (strain ATCC BAA-334 / TIGR4).